Consider the following 606-residue polypeptide: tRNA 5-methylaminomethyl-2-thiouridine biosynthesis bifunctional protein MnmC (606 aa).

Residues 1–237 form a tRNA (mnm(5)s(2)U34)-methyltransferase region; sequence MNSNSSVQFN…KRDMLCGHYL (237 aa). Residues 254–606 form an FAD-dependent cmnm(5)s(2)U34 oxidoreductase region; the sequence is IGGGISAACS…RRISVSRFKG (353 aa).

It in the N-terminal section; belongs to the methyltransferase superfamily. tRNA (mnm(5)s(2)U34)-methyltransferase family. This sequence in the C-terminal section; belongs to the DAO family. The cofactor is FAD.

It localises to the cytoplasm. The catalysed reaction is 5-aminomethyl-2-thiouridine(34) in tRNA + S-adenosyl-L-methionine = 5-methylaminomethyl-2-thiouridine(34) in tRNA + S-adenosyl-L-homocysteine + H(+). In terms of biological role, catalyzes the last two steps in the biosynthesis of 5-methylaminomethyl-2-thiouridine (mnm(5)s(2)U) at the wobble position (U34) in tRNA. Catalyzes the FAD-dependent demodification of cmnm(5)s(2)U34 to nm(5)s(2)U34, followed by the transfer of a methyl group from S-adenosyl-L-methionine to nm(5)s(2)U34, to form mnm(5)s(2)U34. The polypeptide is tRNA 5-methylaminomethyl-2-thiouridine biosynthesis bifunctional protein MnmC (Idiomarina loihiensis (strain ATCC BAA-735 / DSM 15497 / L2-TR)).